The chain runs to 370 residues: tRNA-specific 2-thiouridylase MnmA (370 aa).

ATP contacts are provided by residues 7–14 (ALSGGVDS) and Met34. The segment at 104 to 106 (NPD) is interaction with target base in tRNA. Cys109 (nucleophile) is an active-site residue. The cysteines at positions 109 and 202 are disulfide-linked. Gly134 is a binding site for ATP. Positions 152–154 (KDQ) are interaction with tRNA. The active-site Cysteine persulfide intermediate is the Cys202. An interaction with tRNA region spans residues 308 to 309 (RY).

It belongs to the MnmA/TRMU family.

Its subcellular location is the cytoplasm. It catalyses the reaction S-sulfanyl-L-cysteinyl-[protein] + uridine(34) in tRNA + AH2 + ATP = 2-thiouridine(34) in tRNA + L-cysteinyl-[protein] + A + AMP + diphosphate + H(+). Functionally, catalyzes the 2-thiolation of uridine at the wobble position (U34) of tRNA, leading to the formation of s(2)U34. This is tRNA-specific 2-thiouridylase MnmA from Mycoplasma mobile (strain ATCC 43663 / 163K / NCTC 11711) (Mesomycoplasma mobile).